Here is a 300-residue protein sequence, read N- to C-terminus: MSNCKYAGKIKEFIPKLTPTLHKGQCGRIGIIGGSAEYTGAPYFAAISALKLGADLVYVFCCKEAGPVIKSYSPELIVLPILDSGNVTEKIENWLTRLHALVIGPGLGTKPVNIIRLCNERSKLSVLPLIIDADGLRIVNDNLDLIKKYHGPVILTPNEVEFKRLSSKFSNTEAINVASSLNSVLIQKGSTDVITNGINFDEFDFTFDDVTITCETFGSNRRCGGQGDILSGCIATFVAWFELFKSNNTFIIPLSSVSCYGACAVTKTCSKLAFQKFGRSMTASDMIGCIHQSFTSLFGS.

The YjeF C-terminal domain maps to 6-297; the sequence is YAGKIKEFIP…GCIHQSFTSL (292 aa). (6S)-NADPHX is bound by residues G106 and 158–164; that span reads NEVEFKR. ATP-binding positions include 188–192 and 218–227; these read KGSTD and GSNRRCGGQG. D228 contacts (6S)-NADPHX.

This sequence belongs to the NnrD/CARKD family. Mg(2+) serves as cofactor.

It carries out the reaction (6S)-NADHX + ATP = ADP + phosphate + NADH + H(+). The catalysed reaction is (6S)-NADPHX + ATP = ADP + phosphate + NADPH + H(+). Catalyzes the dehydration of the S-form of NAD(P)HX at the expense of ATP, which is converted to ADP. Together with NAD(P)HX epimerase, which catalyzes the epimerization of the S- and R-forms, the enzyme allows the repair of both epimers of NAD(P)HX, a damaged form of NAD(P)H that is a result of enzymatic or heat-dependent hydration. This chain is ATP-dependent (S)-NAD(P)H-hydrate dehydratase, found in Pediculus humanus subsp. corporis (Body louse).